We begin with the raw amino-acid sequence, 430 residues long: Adenylosuccinate synthetase (430 aa).

GTP is bound by residues 12–18 and 40–42; these read GDEGKGK and GHT. Residue Asp13 is the Proton acceptor of the active site. Positions 13 and 40 each coordinate Mg(2+). IMP is bound by residues 13 to 16, 38 to 41, Thr130, Arg144, Gln224, Thr239, and Arg303; these read DEGK and NAGH. His41 serves as the catalytic Proton donor. Residue 299-305 participates in substrate binding; it reads VNTGRKR. GTP contacts are provided by residues Arg305, 331–333, and 413–415; these read KLD and STS.

It belongs to the adenylosuccinate synthetase family. Homodimer. Mg(2+) is required as a cofactor.

The protein localises to the cytoplasm. The enzyme catalyses IMP + L-aspartate + GTP = N(6)-(1,2-dicarboxyethyl)-AMP + GDP + phosphate + 2 H(+). Its pathway is purine metabolism; AMP biosynthesis via de novo pathway; AMP from IMP: step 1/2. In terms of biological role, plays an important role in the de novo pathway of purine nucleotide biosynthesis. Catalyzes the first committed step in the biosynthesis of AMP from IMP. The sequence is that of Adenylosuccinate synthetase from Nitrobacter hamburgensis (strain DSM 10229 / NCIMB 13809 / X14).